We begin with the raw amino-acid sequence, 396 residues long: Dual specificity mitogen-activated protein kinase kinase dSOR1 (396 aa).

Positions 25-44 (APTPPFKTPSGTDTHSLLGK) are disordered. One can recognise a Protein kinase domain in the interval 87–364 (LEKLGELGSG…LKTLLSHPWI (278 aa)). ATP is bound by residues 93–101 (LGSGNGGVV) and K116. The active-site Proton acceptor is the D209. Residues S237 and S241 each carry the phosphoserine; by RAF modification.

The protein belongs to the protein kinase superfamily. STE Ser/Thr protein kinase family. MAP kinase kinase subfamily. In terms of assembly, interacts with Raf and ksr; Dsor1 binding to ksr probably promotes ksr and Raf dimerization and ksr-mediated Raf transactivation. In terms of processing, phosphorylation on Ser/Thr by MAP kinase kinase kinases regulates positively the kinase activity.

It catalyses the reaction L-seryl-[protein] + ATP = O-phospho-L-seryl-[protein] + ADP + H(+). The catalysed reaction is L-threonyl-[protein] + ATP = O-phospho-L-threonyl-[protein] + ADP + H(+). It carries out the reaction L-tyrosyl-[protein] + ATP = O-phospho-L-tyrosyl-[protein] + ADP + H(+). Required downstream of Raf in the sevenless (sev), torso (tor), and Drosophila EGF receptor homolog (DER) signal transduction pathways. Involved in both positive regulation (at the posterior terminus) and negative regulation (at the anterior domain) of tll, as in other terminal class gene products, maybe via the ERK-A kinase. The chain is Dual specificity mitogen-activated protein kinase kinase dSOR1 (Dsor1) from Drosophila melanogaster (Fruit fly).